A 397-amino-acid polypeptide reads, in one-letter code: Putative serine/threonine-protein kinase R301 (397 aa).

The Protein kinase domain maps to Gln25–Leu397. ATP-binding positions include Val31–Ile39 and Lys53. The Proton acceptor role is filled by Asp218.

It belongs to the protein kinase superfamily. Ser/Thr protein kinase family.

It localises to the virion. It catalyses the reaction L-seryl-[protein] + ATP = O-phospho-L-seryl-[protein] + ADP + H(+). The catalysed reaction is L-threonyl-[protein] + ATP = O-phospho-L-threonyl-[protein] + ADP + H(+). This chain is Putative serine/threonine-protein kinase R301, found in Acanthamoeba polyphaga (Amoeba).